A 435-amino-acid polypeptide reads, in one-letter code: Envelope glycoprotein M (435 aa).

Residues 1 to 36 (MGTQKKGPRSEKVSPYDTTTPEVEALDHQMDTLNWR) lie on the Intravirion side of the membrane. A helical membrane pass occupies residues 37–57 (IWIIQVMMFTLGAVMLLATLI). Topologically, residues 58–111 (AASSEYTGIPCFYAAVVDYELFNATLDGGVWSGNRGGYSAPVLFLEPHSVVAFT) are virion surface. A helical transmembrane segment spans residues 112–132 (YYTALTAMAMAVYTLITAAII). The Intravirion segment spans residues 133–155 (HRETKNQRVRQSSGVAWLVVDPT). Residues 156–176 (TLFWGLLSLWLLNAVVLLLAY) traverse the membrane as a helical segment. Topologically, residues 177–178 (KQ) are virion surface. A helical transmembrane segment spans residues 179-199 (IGVAATLYLGHFATSVIFTTY). At 200–233 (FCGRGKLDETNIKAVANLRQQSVFLYRLAGPTRA) the chain is on the intravirion side. Residues 234–254 (VFVNLMAALMAICILFVSLML) form a helical membrane-spanning segment. The Virion surface portion of the chain corresponds to 255-265 (ELVVANHLHTG). A helical transmembrane segment spans residues 266 to 288 (LWSSVSVAMSTFSTLSVVYLIVS). The Intravirion segment spans residues 289–294 (ELILAH). Residues 295 to 317 (YIHVLIGPSLGTLVACATLGTAA) form a helical membrane-spanning segment. The Virion surface portion of the chain corresponds to 318 to 334 (HSYMDRLYDPISVQSPR). The chain crosses the membrane as a helical span at residues 335 to 355 (LIPTTRGTLACLAVFSVVMLL). Topologically, residues 356-435 (LRLMRAYVYH…LYERSNSGWE (80 aa)) are intravirion.

It belongs to the herpesviridae glycoprotein M family. In terms of assembly, interacts (via N-terminus) with gN (via N-terminus). The gM-gN heterodimer forms the gCII complex.

It is found in the virion membrane. The protein localises to the host Golgi apparatus. The protein resides in the host trans-Golgi network. It localises to the host endosome membrane. Its subcellular location is the host nucleus inner membrane. Functionally, envelope glycoprotein important for virion assembly and egress. Plays a role in the correct incorporation of gH-gL into virion membrane. Directs the glycoprotein N (gN) to the host trans-Golgi network. This is Envelope glycoprotein M from Homo sapiens (Human).